A 91-amino-acid polypeptide reads, in one-letter code: MDKVKYPVLTEKTIRLLERNQYCFDVDLKASKTEIKQWIQDFFKVKVVAMNSHRPPKKKKRIGPVLGYPVRYKRMIITLESNYSIPLFLNK.

This sequence belongs to the universal ribosomal protein uL23 family. Part of the 50S ribosomal subunit.

The protein resides in the plastid. It localises to the chloroplast. Its function is as follows. Binds to 23S rRNA. The sequence is that of Large ribosomal subunit protein uL23c (rpl23) from Anthoceros angustus (Hornwort).